The primary structure comprises 156 residues: RNA pyrophosphohydrolase (156 aa).

The 143-residue stretch at Asn-6–Lys-148 folds into the Nudix hydrolase domain. The Nudix box motif lies at Gly-43–Gly-64.

Belongs to the Nudix hydrolase family. RppH subfamily. A divalent metal cation serves as cofactor.

Functionally, accelerates the degradation of transcripts by removing pyrophosphate from the 5'-end of triphosphorylated RNA, leading to a more labile monophosphorylated state that can stimulate subsequent ribonuclease cleavage. In Campylobacter jejuni subsp. jejuni serotype O:2 (strain ATCC 700819 / NCTC 11168), this protein is RNA pyrophosphohydrolase.